The chain runs to 294 residues: 33 kDa chaperonin (294 aa).

2 disulfide bridges follow: Cys238/Cys240 and Cys271/Cys274.

The protein belongs to the HSP33 family. Post-translationally, under oxidizing conditions two disulfide bonds are formed involving the reactive cysteines. Under reducing conditions zinc is bound to the reactive cysteines and the protein is inactive.

The protein localises to the cytoplasm. Redox regulated molecular chaperone. Protects both thermally unfolding and oxidatively damaged proteins from irreversible aggregation. Plays an important role in the bacterial defense system toward oxidative stress. This is 33 kDa chaperonin from Caldanaerobacter subterraneus subsp. tengcongensis (strain DSM 15242 / JCM 11007 / NBRC 100824 / MB4) (Thermoanaerobacter tengcongensis).